Here is a 264-residue protein sequence, read N- to C-terminus: Phosphate import ATP-binding protein PstB 1 (264 aa).

One can recognise an ABC transporter domain in the interval 20 to 259 (LETRDLNIFY…PKIKLTEDYI (240 aa)). 52-59 (GASGSGKS) contacts ATP.

It belongs to the ABC transporter superfamily. Phosphate importer (TC 3.A.1.7) family. The complex is composed of two ATP-binding proteins (PstB), two transmembrane proteins (PstC and PstA) and a solute-binding protein (PstS).

It localises to the cell membrane. The enzyme catalyses phosphate(out) + ATP + H2O = ADP + 2 phosphate(in) + H(+). Functionally, part of the ABC transporter complex PstSACB involved in phosphate import. Responsible for energy coupling to the transport system. In Ligilactobacillus salivarius (strain UCC118) (Lactobacillus salivarius), this protein is Phosphate import ATP-binding protein PstB 1.